The sequence spans 626 residues: Janus kinase and microtubule-interacting protein 1 (626 aa).

Residues 1–25 (MSKKGRSKGEKPETETDSVQMANEE) form a disordered region. The interval 1–365 (MSKKGRSKGE…KLKSLTRENV (365 aa)) is mediates association with microtubules. Coiled coils occupy residues 13–255 (ETET…EAER) and 284–413 (ERDV…DDLS). The interval 365-626 (VEMKEKLSAQ…ILFEPKLKFV (262 aa)) is mediates interaction with TYK2 and GABBR1. Serine 382 carries the phosphoserine modification. The span at 452–461 (ETLSETSYNT) shows a compositional bias: polar residues. Positions 452–481 (ETLSETSYNTDRTDRTPATPEEDLDETTTR) are disordered. A Phosphothreonine modification is found at threonine 470. The stretch at 490–604 (QLTREYQALQ…EFRVLELEVR (115 aa)) forms a coiled coil.

Belongs to the JAKMIP family. Homodimer. Interacts with JAK1 and TYK2. Forms a complex with GABBR1 and KIF5B/kinesin-1. Post-translationally, phosphorylated. As to expression, specifically expressed in brain and testis by spermatogonia, spermatocytes, spermatozoa and Sertoli cells (at protein level).

The protein localises to the cytoplasm. Its subcellular location is the cytoskeleton. It is found in the membrane. In terms of biological role, associates with microtubules and may play a role in the microtubule-dependent transport of the GABA-B receptor. May play a role in JAK1 signaling and regulate microtubule cytoskeleton rearrangements. The sequence is that of Janus kinase and microtubule-interacting protein 1 (Jakmip1) from Rattus norvegicus (Rat).